Reading from the N-terminus, the 166-residue chain is UPF0304 protein VC_1871 (166 aa).

This sequence belongs to the UPF0304 family.

The chain is UPF0304 protein VC_1871 from Vibrio cholerae serotype O1 (strain ATCC 39315 / El Tor Inaba N16961).